Here is a 315-residue protein sequence, read N- to C-terminus: 2-oxoglutarate and iron-dependent oxygenase domain-containing protein 3 (315 aa).

The tract at residues 1-31 (MAPQRRGPPRIPEGSSAAERRRATSTKKDRL) is disordered. The Cytoplasmic portion of the chain corresponds to 1-41 (MAPQRRGPPRIPEGSSAAERRRATSTKKDRLPREAQRTWLR). Over residues 18–31 (AERRRATSTKKDRL) the composition is skewed to basic and acidic residues. A helical; Signal-anchor for type II membrane protein transmembrane segment spans residues 42–62 (IVAFGVGLALVTCLLWSSVGI). The Lumenal segment spans residues 63–315 (DDDVAEVVAR…DHGIEDPVLT (253 aa)). Positions 203–305 (KPTFFSRINS…AITIAFTCNP (103 aa)) constitute a Fe2OG dioxygenase domain. The N-linked (GlcNAc...) asparagine glycan is linked to Asn-211. 2 residues coordinate Fe cation: His-226 and Asp-228. Asn-263 is a glycosylation site (N-linked (GlcNAc...) asparagine). Residue His-284 participates in Fe cation binding. Arg-294 is a catalytic residue. 2-oxoglutarate is bound at residue Arg-294.

It belongs to the OGFOD3 family. Fe(2+) serves as cofactor. It depends on L-ascorbate as a cofactor.

It is found in the membrane. This chain is 2-oxoglutarate and iron-dependent oxygenase domain-containing protein 3 (Ogfod3), found in Mus musculus (Mouse).